A 237-amino-acid chain; its full sequence is Pyridoxal phosphate homeostasis protein (237 aa).

An N6-(pyridoxal phosphate)lysine modification is found at K35.

It belongs to the pyridoxal phosphate-binding protein YggS/PROSC family.

Pyridoxal 5'-phosphate (PLP)-binding protein, which is involved in PLP homeostasis. The protein is Pyridoxal phosphate homeostasis protein of Haemophilus influenzae (strain ATCC 51907 / DSM 11121 / KW20 / Rd).